Reading from the N-terminus, the 114-residue chain is As-peptide 126 (114 aa).

Positions 1–22 (MSRALICSLALLAMLVISGTYA) are cleaved as a signal peptide. 9 repeat units span residues 22-29 (ASPAANAE), 30-37 (ALAAANAE), 38-45 (ASAAANAE), 46-53 (PLAAANAE), 54-61 (PLAAANAE), 62-69 (PLAAANAD), 70-77 (PIAAANAE), 78-85 (PSAAANAE), and 86-93 (PLAAANAE). The segment at 22–93 (ASPAANAEAL…AEPLAAANAE (72 aa)) is 9 X 8 AA approximate tandem repeats of [AP]-[ILS]-[AP]-A-A-N-A-[DE]. Positions 23–104 (SPAANAEALA…SAGPSPLAAA (82 aa)) are excised as a propeptide. The span at 82-96 (ANAEPLAAANAEPSA) shows a compositional bias: low complexity. Residues 82–114 (ANAEPLAAANAEPSAGPSPLAAAQDPPVVKMKG) are disordered. A Pyrrolidone carboxylic acid modification is found at glutamine 105. Lysine 113 is modified (lysine amide).

Expressed by the venom gland.

The protein resides in the secreted. The protein is As-peptide 126 of Anoplius samariensis (Solitary wasp).